Consider the following 104-residue polypeptide: Small ribosomal subunit protein bS18 (104 aa).

The segment covering 1 to 14 (MMNNEHDNFQKEVE) has biased composition (basic and acidic residues). A disordered region spans residues 1-25 (MMNNEHDNFQKEVETTTETTFNREE).

This sequence belongs to the bacterial ribosomal protein bS18 family. As to quaternary structure, part of the 30S ribosomal subunit. Forms a tight heterodimer with protein bS6.

Binds as a heterodimer with protein bS6 to the central domain of the 16S rRNA, where it helps stabilize the platform of the 30S subunit. The sequence is that of Small ribosomal subunit protein bS18 from Mycoplasma pneumoniae (strain ATCC 29342 / M129 / Subtype 1) (Mycoplasmoides pneumoniae).